The following is a 928-amino-acid chain: DNA polymerase I (928 aa).

Residues 1-323 (MVQIPENPLI…IDESPSEPAA (323 aa)) form the 5'-3' exonuclease domain. The 3'-5' exonuclease domain occupies 324 to 517 (ALSYENYVTI…LHLKMWPELQ (194 aa)). The interval 324-928 (ALSYENYVTI…GSGENWDQAH (605 aa)) is klenow fragment. Residues 521 to 928 (GPLNVFENIE…GSGENWDQAH (408 aa)) form a polymerase region.

The protein belongs to the DNA polymerase type-A family. In terms of assembly, single-chain monomer with multiple functions.

It catalyses the reaction DNA(n) + a 2'-deoxyribonucleoside 5'-triphosphate = DNA(n+1) + diphosphate. Functionally, in addition to polymerase activity, this DNA polymerase exhibits 3'-5' and 5'-3' exonuclease activity. It is able to utilize nicked circular duplex DNA as a template and can unwind the parental DNA strand from its template. The protein is DNA polymerase I (polA) of Salmonella typhimurium (strain LT2 / SGSC1412 / ATCC 700720).